Here is a 628-residue protein sequence, read N- to C-terminus: Probable potassium transport system protein Kup (628 aa).

Transmembrane regions (helical) follow at residues 20–40 (ALLTLGALGVVFGDIGTSPLY), 63–83 (IISMVLWTITLIVTVKYVMLV), 110–130 (FVAVAGMLGAALFYGDVVITP), 151–171 (FILPISLAVLIAIFAIQPLGT), 178–198 (FGPIMLLWFVTLAGLGIPQII), 212–232 (ALGLIVAEPFQAFVLLGAVVL), 256–276 (WFCVVMPALILTYLGQGALVI), 296–316 (IPLVILATIATVIASQAVISG), 346–366 (IYMPLVNGLLFVSVMVVVLVF), 375–395 (AYGLAVTGTLVLVSVLYLIYV), 398–418 (TWWKTALFIVFIGIPEVLLFA), and 422–442 (TKIHDGGWLPLLTAAVLIVVM).

This sequence belongs to the HAK/KUP transporter (TC 2.A.72) family.

The protein localises to the cell membrane. It catalyses the reaction K(+)(in) + H(+)(in) = K(+)(out) + H(+)(out). In terms of biological role, transport of potassium into the cell. Likely operates as a K(+):H(+) symporter. The chain is Probable potassium transport system protein Kup from Corynebacterium glutamicum (strain R).